The chain runs to 166 residues: Small ribosomal subunit protein uS5 (166 aa).

Residues 11 to 74 (LEDRVVSINR…EDAKKNLINV (64 aa)) form the S5 DRBM domain.

Belongs to the universal ribosomal protein uS5 family. In terms of assembly, part of the 30S ribosomal subunit. Contacts proteins S4 and S8.

Its function is as follows. With S4 and S12 plays an important role in translational accuracy. Located at the back of the 30S subunit body where it stabilizes the conformation of the head with respect to the body. The polypeptide is Small ribosomal subunit protein uS5 (Latilactobacillus sakei subsp. sakei (strain 23K) (Lactobacillus sakei subsp. sakei)).